The primary structure comprises 118 residues: UPF0102 protein lpp3065 (118 aa).

Belongs to the UPF0102 family.

This chain is UPF0102 protein lpp3065, found in Legionella pneumophila (strain Paris).